The sequence spans 263 residues: Phosphoinositide-3-kinase-interacting protein 1 (263 aa).

An N-terminal signal peptide occupies residues 1–18 (MFGRLYFMLLLSVGLVDC). The Extracellular segment spans residues 19 to 163 (LSVVKDCITN…SGPKKKKDLG (145 aa)). The region spanning 24 to 99 (DCITNNGEDY…KKEACDIRIC (76 aa)) is the Kringle domain. 3 disulfide bridges follow: Cys-25/Cys-99, Cys-46/Cys-80, and Cys-69/Cys-94. N-linked (GlcNAc...) asparagine glycosylation is present at Asn-103. Residues 164–184 (TLGYVLAVFMMAIIILLGGGI) form a helical membrane-spanning segment. Over 185–263 (TMGYFYKRGR…LMGSAGTPGA (79 aa)) the chain is Cytoplasmic. The tract at residues 239-263 (NNQTPTQEPVEGADPLMGSAGTPGA) is disordered.

Its subcellular location is the cell membrane. Functionally, negative regulator of hepatic phosphatidylinositol 3-kinase (PI3K) activity. The polypeptide is Phosphoinositide-3-kinase-interacting protein 1 (pik3ip1) (Danio rerio (Zebrafish)).